The primary structure comprises 326 residues: Pancreas transcription factor 1 subunit alpha (326 aa).

One can recognise a bHLH domain in the interval 162-214 (QLRQAANVRERRRMQSINDAFEGLRSHIPTLPYEKRLSKVDTLRLAIGYINFL). Gly residues predominate over residues 229 to 240 (TGGCGGPGGSRH). 2 disordered regions span residues 229-249 (TGGC…PGNQ) and 304-326 (DPRK…EFVS).

Component of the pancreas transcription factor 1 complex (PTF1) which is composed of TCF3/p75, TCF12/p64 and PTF1A/p48. TCF3 is responsible for the nuclear import of the p48/p64 complex. Interacts with TCF3 and RBPSUH/RBP-Jkappa. In terms of tissue distribution, exocrine pancreas-specific. Expressed in azaserine-induced pancreatic tumors (at protein level). Expressed in AR42J cells but not in ARIP, DSL6A, or DSL6B cells. Down-regulation is associated with the change of an azaserine-induced acinar cell carcinoma to a ductal phenotype.

The protein resides in the nucleus. It localises to the cytoplasm. In terms of biological role, transcription factor implicated in the cell fate determination in various organs. Binds to the E-box consensus sequence 5'-CANNTG-3'. Plays a role in early and late pancreas development and differentiation. Important for determining whether cells allocated to the pancreatic buds continue towards pancreatic organogenesis or revert back to duodenal fates. May be involved in the maintenance of exocrine pancreas-specific gene expression including ELA1 and amylase. Required for the formation of pancreatic acinar and ductal cells. Plays an important role in cerebellar development. Directly regulated by FOXN4 and RORC during retinal development, FOXN4-PTF1A pathway plays a central role in directing the differentiation of retinal progenitors towards horizontal and amacrine fates. The chain is Pancreas transcription factor 1 subunit alpha (Ptf1a) from Rattus norvegicus (Rat).